A 141-amino-acid polypeptide reads, in one-letter code: Acetyltransferase YE1169 (141 aa).

The region spanning 1–141 (MEIRVFQQSD…GKRLIVDQEY (141 aa)) is the N-acetyltransferase domain.

This sequence belongs to the acetyltransferase family. YpeA subfamily.

This is Acetyltransferase YE1169 from Yersinia enterocolitica serotype O:8 / biotype 1B (strain NCTC 13174 / 8081).